Consider the following 1666-residue polypeptide: Complement C3 (1666 aa).

Positions Met1 to Gly22 are cleaved as a signal peptide. Residues Ser70, Ser296, and Ser302 each carry the phosphoserine modification. Disulfide bonds link Cys557-Cys821, Cys630-Cys666, Cys698-Cys725, Cys699-Cys732, Cys712-Cys733, Cys878-Cys1517, Cys1106-Cys1163, Cys1363-Cys1493, Cys1394-Cys1462, Cys1510-Cys1515, Cys1522-Cys1593, Cys1540-Cys1664, and Cys1640-Cys1649. A Phosphoserine modification is found at Ser676. In terms of domain architecture, Anaphylatoxin-like spans Cys698–Cys733. N-linked (GlcNAc...) asparagine glycosylation is present at Asn944. Ser973 is subject to Phosphoserine. A cross-link (isoglutamyl cysteine thioester (Cys-Gln)) is located at residues Cys1015–Gln1018. Position 1326 is a phosphoserine (Ser1326). The 143-residue stretch at Cys1522 to Cys1664 folds into the NTR domain. At Ser1576 the chain carries Phosphoserine. N-linked (GlcNAc...) asparagine glycosylation is present at Asn1620. An interaction with CFP/properdin region spans residues Ala1637–Phe1662.

In absence of complement activation, the C3 precursor is first processed by the removal of 4 Arg residues, forming two chains, beta and alpha, linked by a disulfide bond. As to quaternary structure, complement C3b is composed of complement C3b and complement C3 beta chains that are associated via disulfide bonds. Non-enzymatic component of the C5 convertase, also named C4bC2bC3b, composed of the serine protease complement C2b (C2), complement C3b, as well as complement C4b (C4). Non-enzymatic component of the C5 convertase of the alternative complement pathways composed of the serine protease complement CFB and complement C3b. Interacts with CFP; interaction takes place together with CFB in the alternative complement system and allows the complex to become active. Interacts with CR1 (via Sushi 8 and Sushi 9 domains). Interacts with CFH. In terms of assembly, interacts with CFH. Interacts with CR2. During pregnancy, C3dg exists as a complex (probably a 2:2:2 heterohexamer) with AGT and the proform of PRG2. Interacts with CR2 (via the N-terminal Sushi domains 1 and 2). In terms of processing, C3 precursor is first processed by the removal of 4 Arg residues, forming two chains, beta and alpha, linked by a disulfide bond. During activation of the complement systems, the alpha chain is cleaved into C3a and C3b by the C3 convertase: C3b stays linked to the beta chain, while C3a is released in the plasma. The alpha chain is cleaved by the serine protease complement C2b component of the C3 convertase to generate C3a and C3b following activation by the classical, lectin and GZMK complement systems. The alpha chain is cleaved by CFB component of the C3 convertase to generate C3a and C3b following activation by the alternative complement system. Post-translationally, C3a is further processed by carboxypeptidases to release the C-terminal arginine residue generating the acylation stimulating protein (ASP). Levels of ASP are increased in adipocytes in the postprandial period and by insulin and dietary chylomicrons. Complement C3b is rapidly split in two positions by factor I (CFI) and a cofactor (CFH) to form iC3b (inactivated C3b) and C3f which is released. CFI and CFH catalyze proteolytic degradation of already-deposited complement C3b. Then iC3b is slowly cleaved (possibly by CFI) to form C3c (beta chain + alpha' chain fragment 1 + alpha' chain fragment 2), C3dg and C3f. Other proteases produce other fragments such as C3d or C3g. In terms of processing, upon activation, the internal thioester bond reacts with carbohydrate antigens on the target surface to form amide or ester bonds, leading to covalent association with the surface of pathogens. Post-translationally, complement C3b interacts with complement C4b via a thioester linkage. Phosphorylated by FAM20C in the extracellular medium.

The protein resides in the secreted. The protein localises to the cell surface. Its activity is regulated as follows. Complement activation is inhibited by VSIG4. In terms of biological role, precursor of non-enzymatic components of the classical, alternative, lectin and GZMK complement pathways, which consist in a cascade of proteins that leads to phagocytosis and breakdown of pathogens and signaling that strengthens the adaptive immune system. Its function is as follows. Non-enzymatic component of C5 convertase. Generated following cleavage by C3 convertase, it covalently attaches to the surface of pathogens, where it acts as an opsonin that marks the surface of antigens for removal. Complement C3b binds covalently via its reactive thioester, to cell surface carbohydrates or immune aggregates. Together with complement C4b, it then recruits the serine protease complement C2b to form the C5 convertase, which cleaves and activate C5, the next component of the complement pathways. In the alternative complement pathway, recruits the serine protease CFB to form the C5 convertase that cleaves and activates C5. Mediator of local inflammatory process released following cleavage by C3 convertase. Acts by binding to its receptor, C3AR1, activating G protein-coupled receptor signaling, promoting the phosphorylation, ARRB2-mediated internalization and endocytosis of C3AR1. C3a anaphylatoxin stimulates the activation of immune cells such as mast cells and basophilic leukocytes to release inflammation agents, such as cytokines, chemokines and histamine, which promote inflammation development. Also acts as potent chemoattractant for the migration of macrophages and neutrophils to the inflamed tissues, resulting in neutralization of the inflammatory triggers by multiple ways, such as phagocytosis and generation of reactive oxidants. Functionally, adipogenic hormone that stimulates triglyceride synthesis and glucose transport in adipocytes, regulating fat storage and playing a role in postprandial triglyceride clearance. Appears to stimulate triglyceride synthesis via activation of the PLC, MAPK and AKT signaling pathways. Acts by binding to its receptor, C5AR2, activating G protein-coupled receptor signaling, promoting the phosphorylation, ARRB2-mediated internalization and endocytosis of C5AR2. In terms of biological role, acts as a chemoattractant for neutrophils in chronic inflammation. This is Complement C3 from Cavia porcellus (Guinea pig).